Here is a 232-residue protein sequence, read N- to C-terminus: Aquaporin Z (232 aa).

2 consecutive transmembrane segments (helical) span residues 8-28 (AFGT…AAGF) and 33-53 (IGLL…AFAI). Positions 62 to 64 (NPA) match the NPA 1 motif. The next 3 helical transmembrane spans lie at 84–104 (IIAQ…IATG), 130–150 (MLAA…VIMG), and 159–179 (GFAP…SIPV). An NPA 2 motif is present at residues 185–187 (NPA). A helical transmembrane segment spans residues 201–221 (VSQLWLFWVAPIVGGVLGAVI).

The protein belongs to the MIP/aquaporin (TC 1.A.8) family. Homotetramer.

The protein localises to the cell inner membrane. The enzyme catalyses H2O(in) = H2O(out). Channel that permits osmotically driven movement of water in both directions. It is involved in the osmoregulation and in the maintenance of cell turgor during volume expansion in rapidly growing cells. It mediates rapid entry or exit of water in response to abrupt changes in osmolarity. This is Aquaporin Z from Vibrio parahaemolyticus serotype O3:K6 (strain RIMD 2210633).